Consider the following 138-residue polypeptide: MDKLSEFCSKFVENVMKMTVNQLNKVTKELAKKITIDSNFKSVTDNNSVIESSKEITENKVIEKLEFNIILESFISSQRIKLIKTLRDLISIGLKEAKDLIETLPKTIYEGVSKEFAEETKKTLEESGASVIITENII.

This sequence belongs to the bacterial ribosomal protein bL12 family. As to quaternary structure, homodimer. Part of the ribosomal stalk of the 50S ribosomal subunit. Forms a multimeric L10(L12)X complex, where L10 forms an elongated spine to which 2 to 4 L12 dimers bind in a sequential fashion. Binds GTP-bound translation factors.

It localises to the plastid. Its function is as follows. Forms part of the ribosomal stalk which helps the ribosome interact with GTP-bound translation factors. Is thus essential for accurate translation. The sequence is that of Large ribosomal subunit protein bL12c from Euglena longa (Euglenophycean alga).